We begin with the raw amino-acid sequence, 303 residues long: Acetylglutamate kinase (303 aa).

Substrate contacts are provided by residues 69–70 (GG), Arg-91, and Asn-201.

The protein belongs to the acetylglutamate kinase family. ArgB subfamily.

The protein localises to the cytoplasm. The catalysed reaction is N-acetyl-L-glutamate + ATP = N-acetyl-L-glutamyl 5-phosphate + ADP. Its pathway is amino-acid biosynthesis; L-arginine biosynthesis; N(2)-acetyl-L-ornithine from L-glutamate: step 2/4. Functionally, catalyzes the ATP-dependent phosphorylation of N-acetyl-L-glutamate. The protein is Acetylglutamate kinase of Novosphingobium aromaticivorans (strain ATCC 700278 / DSM 12444 / CCUG 56034 / CIP 105152 / NBRC 16084 / F199).